Consider the following 706-residue polypeptide: Phenylalanine--tRNA ligase beta subunit, chloroplastic (706 aa).

In terms of domain architecture, B5 spans 300 to 388 (KVLKPIVLNY…RLHGFNNFLT (89 aa)). Mg(2+) is bound by residues aspartate 366, aspartate 372, glutamate 375, and glutamate 376. One can recognise an FDX-ACB domain in the interval 612–705 (SVYPKIVKDL…LELKVQAILR (94 aa)).

It belongs to the phenylalanyl-tRNA synthetase beta subunit family. Type 1 subfamily. In terms of assembly, tetramer of two alpha and two beta subunits. The cofactor is Mg(2+).

The protein localises to the plastid. It is found in the chloroplast. The enzyme catalyses tRNA(Phe) + L-phenylalanine + ATP = L-phenylalanyl-tRNA(Phe) + AMP + diphosphate + H(+). This Phaeodactylum tricornutum (strain CCAP 1055/1) protein is Phenylalanine--tRNA ligase beta subunit, chloroplastic.